Consider the following 356-residue polypeptide: Alanine racemase (356 aa).

K35 serves as the catalytic Proton acceptor; specific for D-alanine. At K35 the chain carries N6-(pyridoxal phosphate)lysine. R130 provides a ligand contact to substrate. The active-site Proton acceptor; specific for L-alanine is Y253. M301 provides a ligand contact to substrate.

It belongs to the alanine racemase family. Requires pyridoxal 5'-phosphate as cofactor.

It carries out the reaction L-alanine = D-alanine. It functions in the pathway amino-acid biosynthesis; D-alanine biosynthesis; D-alanine from L-alanine: step 1/1. Catalyzes the interconversion of L-alanine and D-alanine. May also act on other amino acids. The chain is Alanine racemase (alr) from Sodalis glossinidius (strain morsitans).